We begin with the raw amino-acid sequence, 359 residues long: Lachesin (359 aa).

The N-terminal stretch at methionine 1 to alanine 25 is a signal peptide. The 102-residue stretch at proline 29–serine 130 folds into the Ig-like V-type domain. Cysteine 50 and cysteine 113 are joined by a disulfide. Asparagine 92 and asparagine 140 each carry an N-linked (GlcNAc...) asparagine glycan. Ig-like C2-type domains lie at proline 135–glutamate 221 and proline 226–asparagine 317. Cystine bridges form between cysteine 157–cysteine 204 and cysteine 247–cysteine 303. The GPI-anchor amidated alanine moiety is linked to residue alanine 336. Positions glycine 337–arginine 359 are cleaved as a propeptide — removed in mature form.

Expressed on differentiating neuronal cells from the onset of neurogenesis in both the central and peripheral nervous systems. First detected in the cellularized blastoderm, apart from in the ventral side. Expression persists uniformly in the early ectoderm until the end of gastrulation. From stage 10, expressed in an alternating strong/weak pattern in each segment until stage 15 when it disappears. From stage 11, expressed in subsets of neurons and later subsets of glial cells. From early stage 13, strongly expressed in trachea, hindgut, foregut and the nervous system.

It is found in the cell membrane. Required for normal tracheal development and maintenance of the trans-epithelial diffusion barrier. Functions as a homophilic cell-adhesion molecule. May play a role in early neuronal differentiation and axon outgrowth. In Drosophila melanogaster (Fruit fly), this protein is Lachesin (Lac).